The following is a 458-amino-acid chain: DNA repair protein RadA (458 aa).

The segment at 11 to 28 adopts a C4-type zinc-finger fold; it reads CNDCGAEFSRWQGQCSAC. ATP is bound at residue 100 to 107; the sequence is GHPGAGKS. The RadA KNRFG motif signature appears at 256–260; that stretch reads KNRFG. The lon-protease-like stretch occupies residues 355-458; that stretch reads DVFVNVVGGV…TDALAVLDNL (104 aa).

Belongs to the RecA family. RadA subfamily.

Its function is as follows. DNA-dependent ATPase involved in processing of recombination intermediates, plays a role in repairing DNA breaks. Stimulates the branch migration of RecA-mediated strand transfer reactions, allowing the 3' invading strand to extend heteroduplex DNA faster. Binds ssDNA in the presence of ADP but not other nucleotides, has ATPase activity that is stimulated by ssDNA and various branched DNA structures, but inhibited by SSB. Does not have RecA's homology-searching function. The protein is DNA repair protein RadA of Haemophilus influenzae (strain ATCC 51907 / DSM 11121 / KW20 / Rd).